The sequence spans 279 residues: Putative pyruvate, phosphate dikinase regulatory protein (279 aa).

Gly154 to Thr161 contributes to the ADP binding site.

The protein belongs to the pyruvate, phosphate/water dikinase regulatory protein family. PDRP subfamily.

It carries out the reaction N(tele)-phospho-L-histidyl/L-threonyl-[pyruvate, phosphate dikinase] + ADP = N(tele)-phospho-L-histidyl/O-phospho-L-threonyl-[pyruvate, phosphate dikinase] + AMP + H(+). The enzyme catalyses N(tele)-phospho-L-histidyl/O-phospho-L-threonyl-[pyruvate, phosphate dikinase] + phosphate + H(+) = N(tele)-phospho-L-histidyl/L-threonyl-[pyruvate, phosphate dikinase] + diphosphate. In terms of biological role, bifunctional serine/threonine kinase and phosphorylase involved in the regulation of the pyruvate, phosphate dikinase (PPDK) by catalyzing its phosphorylation/dephosphorylation. This chain is Putative pyruvate, phosphate dikinase regulatory protein, found in Rhodopseudomonas palustris (strain BisB18).